Here is a 191-residue protein sequence, read N- to C-terminus: Thymidine kinase (191 aa).

Residues 9–16 (GSMNSGKT) and 85–88 (DESQ) contribute to the ATP site. The active-site Proton acceptor is Glu86. Zn(2+)-binding residues include Cys143, Cys146, Cys181, and Cys184.

This sequence belongs to the thymidine kinase family. Homotetramer.

It localises to the cytoplasm. The catalysed reaction is thymidine + ATP = dTMP + ADP + H(+). This chain is Thymidine kinase, found in Listeria monocytogenes serotype 4b (strain F2365).